Here is a 405-residue protein sequence, read N- to C-terminus: Glucoside xylosyltransferase 1 (405 aa).

Over 1–2 (MR) the chain is Cytoplasmic. The chain crosses the membrane as a helical; Signal-anchor for type II membrane protein span at residues 3-23 (IYLRTFGLCIVVALLSLVFLF). Topologically, residues 24 to 405 (SKHDEGSFSA…RLQRATPPGD (382 aa)) are lumenal. The disordered stretch occupies residues 46–65 (SFNGAKAKQRPTATTSHRDV). N202, N243, N277, and N372 each carry an N-linked (GlcNAc...) asparagine glycan.

Belongs to the glycosyltransferase 8 family.

The protein resides in the membrane. The catalysed reaction is 3-O-(beta-D-glucosyl)-L-seryl-[EGF-like domain protein] + UDP-alpha-D-xylose = 3-O-[alpha-D-xylosyl-(1-&gt;3)-beta-D-glucosyl]-L-seryl-[EGF-like domain protein] + UDP + H(+). Functionally, glycosyltransferase which elongates the O-linked glucose attached to EGF-like repeats in the extracellular domain of Notch proteins by catalyzing the addition of xylose. In Danio rerio (Zebrafish), this protein is Glucoside xylosyltransferase 1 (gxylt1).